The primary structure comprises 166 residues: MKKKQTTKALLVTCITDHKQDFYRLAFSYVKNQDDALDIVQESIKKALSSVETVRNPETIKSWFYKILVRTAIDFLRKQKKIRVMDDETIEFLSKGKEDHYKDTDLHEALDELPYRYKTIIILRFFEDLKLEEIAEITGENTNTVKTRLYRALKLMRIQLTKEDLS.

The short motif at 38-51 (DIVQESIKKALSSV) is the Polymerase core binding element. A DNA-binding region (H-T-H motif) is located at residues 131 to 150 (LEEIAEITGENTNTVKTRLY).

This sequence belongs to the sigma-70 factor family. ECF subfamily. In terms of assembly, interacts with RsiV.

Sigma factors are initiation factors that promote the attachment of RNA polymerase to specific initiation sites and are then released. Positively regulates the expression of proteins involved in stress responses against bacitracin, paraquat and tellurite. The chain is RNA polymerase sigma factor SigV (sigV) from Bacillus subtilis (strain 168).